Consider the following 146-residue polypeptide: Deoxyuridine 5'-triphosphate nucleotidohydrolase (146 aa).

Substrate-binding positions include 66 to 68, Asn-79, and 83 to 85; these read RSG and TID.

It belongs to the dUTPase family. The cofactor is Mg(2+).

It carries out the reaction dUTP + H2O = dUMP + diphosphate + H(+). It functions in the pathway pyrimidine metabolism; dUMP biosynthesis; dUMP from dCTP (dUTP route): step 2/2. This enzyme is involved in nucleotide metabolism: it produces dUMP, the immediate precursor of thymidine nucleotides and it decreases the intracellular concentration of dUTP so that uracil cannot be incorporated into DNA. This Citrifermentans bemidjiense (strain ATCC BAA-1014 / DSM 16622 / JCM 12645 / Bem) (Geobacter bemidjiensis) protein is Deoxyuridine 5'-triphosphate nucleotidohydrolase.